The following is a 453-amino-acid chain: Ethanolamine ammonia-lyase large subunit (453 aa).

Substrate-binding positions include 160–162 (RLQ) and asparagine 193. Adenosylcob(III)alamin is bound by residues proline 194 and glutamine 246. Glutamate 287 is a substrate binding site. An adenosylcob(III)alamin-binding site is contributed by serine 295. A substrate-binding site is contributed by aspartate 362. An adenosylcob(III)alamin-binding site is contributed by methionine 401.

This sequence belongs to the EutB family. In terms of assembly, the basic unit is a heterodimer which dimerizes to form tetramers. The heterotetramers trimerize; 6 large subunits form a core ring with 6 small subunits projecting outwards. Adenosylcob(III)alamin is required as a cofactor.

It localises to the bacterial microcompartment. The catalysed reaction is ethanolamine = acetaldehyde + NH4(+). It functions in the pathway amine and polyamine degradation; ethanolamine degradation. Catalyzes the deamination of various vicinal amino-alcohols to oxo compounds. It is spontaneously inactivated by its substrate and reactivated by EutA. May play a role in BMC assembly or maintenance. Its function is as follows. Expression of the eut operon allows this bacteria to use ethanolamine (EA) as a carbon, nitrogen and energy source. It relies on cobalamin (vitamin B12) both as a cofactor for the ethanolamine ammonia-lyase activity and to induce the operon. EA enhances bacterial survival in macrophages in a concentration-dependent manner, suggesting it is an important nutrient during infection. The protein is Ethanolamine ammonia-lyase large subunit of Salmonella typhimurium (strain LT2 / SGSC1412 / ATCC 700720).